We begin with the raw amino-acid sequence, 315 residues long: Transcription repressor OFP7 (315 aa).

The tract at residues 113-183 is disordered; it reads YETPRRKIYN…ELPRVTRRPR (71 aa). Residues 130–145 are compositionally biased toward basic residues; it reads RRRLKKKEKSNSRRRG. The span at 160–174 shows a compositional bias: polar residues; the sequence is LPSSTNLSPEYSSSE. Residues 230 to 289 form the OVATE domain; sequence VVKKSEDPYEDFKGSMMEMIVEKKMFEVAELEQLLSCFLSLNAKRHHRAIVRAFSEIWVA.

As to expression, expressed in roots, shoots, stems, flower buds and siliques.

It is found in the nucleus. Transcriptional repressor that regulates multiple aspects of plant growth and development through the regulation of BEL1-LIKE (BLH) and KNOX TALE (KNAT) homeodomain transcription factors. The sequence is that of Transcription repressor OFP7 (OFP7) from Arabidopsis thaliana (Mouse-ear cress).